The following is a 211-amino-acid chain: Cytochrome c biogenesis ATP-binding export protein CcmA (211 aa).

The ABC transporter domain maps to 8–210 (LEAKNLQCER…EVRRIQLGAV (203 aa)). Position 40-47 (40-47 (GPNGAGKT)) interacts with ATP.

Belongs to the ABC transporter superfamily. CcmA exporter (TC 3.A.1.107) family. In terms of assembly, the complex is composed of two ATP-binding proteins (CcmA) and two transmembrane proteins (CcmB).

Its subcellular location is the cell inner membrane. The catalysed reaction is heme b(in) + ATP + H2O = heme b(out) + ADP + phosphate + H(+). Part of the ABC transporter complex CcmAB involved in the biogenesis of c-type cytochromes; once thought to export heme, this seems not to be the case, but its exact role is uncertain. Responsible for energy coupling to the transport system. This chain is Cytochrome c biogenesis ATP-binding export protein CcmA, found in Hahella chejuensis (strain KCTC 2396).